Here is a 159-residue protein sequence, read N- to C-terminus: MIDPDGFRPNVGIILTNDAGQVLWARRINQDAWQFPQGGINPDETPEDALYRELNEEVGLEREDVQILACTRGWLRYRLPQRLVRTHSQPLCIGQKQKWFLLRLISNEQRVRMDLTGKPEFDGWRWVSYWYPLGQVVTFKREVYRRALKELAPRLLVRD.

The region spanning 6 to 149 (GFRPNVGIIL…KREVYRRALK (144 aa)) is the Nudix hydrolase domain. Positions 38-59 (GGINPDETPEDALYRELNEEVG) match the Nudix box motif.

Belongs to the Nudix hydrolase family. RppH subfamily. A divalent metal cation serves as cofactor.

Functionally, accelerates the degradation of transcripts by removing pyrophosphate from the 5'-end of triphosphorylated RNA, leading to a more labile monophosphorylated state that can stimulate subsequent ribonuclease cleavage. In Pseudomonas fluorescens (strain ATCC BAA-477 / NRRL B-23932 / Pf-5), this protein is RNA pyrophosphohydrolase.